Reading from the N-terminus, the 554-residue chain is Inactive sesquithujene synthase (554 aa).

Positions 308 and 312 each coordinate Mg(2+). Substrate contacts are provided by aspartate 308, aspartate 312, arginine 449, and asparagine 452. A DDXXD motif motif is present at residues 308-312; it reads DDMFD. The Mg(2+) site is built by asparagine 452, serine 456, and glutamate 460.

It belongs to the terpene synthase family. Monomer. Requires Mg(2+) as cofactor. The cofactor is Mn(2+).

The protein resides in the cytoplasm. It functions in the pathway secondary metabolite biosynthesis; terpenoid biosynthesis. In terms of biological role, non-functional sesquiterpene synthase having less than 1% of the activity found in cv. Delprim. The sequence is that of Inactive sesquithujene synthase from Zea mays (Maize).